Here is a 303-residue protein sequence, read N- to C-terminus: ATP phosphoribosyltransferase (303 aa).

It belongs to the ATP phosphoribosyltransferase family. Long subfamily. The cofactor is Mg(2+).

It is found in the cytoplasm. The catalysed reaction is 1-(5-phospho-beta-D-ribosyl)-ATP + diphosphate = 5-phospho-alpha-D-ribose 1-diphosphate + ATP. It participates in amino-acid biosynthesis; L-histidine biosynthesis; L-histidine from 5-phospho-alpha-D-ribose 1-diphosphate: step 1/9. With respect to regulation, feedback inhibited by histidine. In terms of biological role, catalyzes the condensation of ATP and 5-phosphoribose 1-diphosphate to form N'-(5'-phosphoribosyl)-ATP (PR-ATP). Has a crucial role in the pathway because the rate of histidine biosynthesis seems to be controlled primarily by regulation of HisG enzymatic activity. This is ATP phosphoribosyltransferase from Haemophilus influenzae (strain PittGG).